We begin with the raw amino-acid sequence, 340 residues long: tRNA N6-adenosine threonylcarbamoyltransferase (340 aa).

Residues histidine 115 and histidine 119 each coordinate Fe cation. Substrate-binding positions include 138 to 142 (VVSGG), aspartate 171, glycine 184, aspartate 188, and asparagine 278. Aspartate 306 contacts Fe cation.

Belongs to the KAE1 / TsaD family. Fe(2+) is required as a cofactor.

It localises to the cytoplasm. It catalyses the reaction L-threonylcarbamoyladenylate + adenosine(37) in tRNA = N(6)-L-threonylcarbamoyladenosine(37) in tRNA + AMP + H(+). Required for the formation of a threonylcarbamoyl group on adenosine at position 37 (t(6)A37) in tRNAs that read codons beginning with adenine. Is involved in the transfer of the threonylcarbamoyl moiety of threonylcarbamoyl-AMP (TC-AMP) to the N6 group of A37, together with TsaE and TsaB. TsaD likely plays a direct catalytic role in this reaction. This is tRNA N6-adenosine threonylcarbamoyltransferase from Clostridium botulinum (strain Hall / ATCC 3502 / NCTC 13319 / Type A).